A 463-amino-acid chain; its full sequence is MTKPFSVVLASLLAITSTISPLASAQQSQPLDRIAAIVDEDVVLQSELDRAVRNVKSQYAGRENQLPPDDVLQRQVLERLILVKLQVGRADGSGIRVSDEELNRAIASIAQQNGTTVDGLRQKLAADGMGYADFRASVRDEIIVQRLRQSFAQSRISVSEGEVDTALTQQAATGSKYHLAHILIGLPEGATAEQIATGQKKVDGVKALIDKGELDFPAAAVRYSDSPNALEGGDLGWRSLDEIPNAFAQLIRDMKPGQVAGPLRGPSGFQLLKLMEMRDANAGGEKKMVTEYNARHILVRVGDNQTEAQAKAKIDTIRARIVGGADFQATAKESSEDTNSRGQGGDLGWFPADAFGPDFGKQVEGLADGAVSEPFRTQAGWHIVQRVGSRQTDVSAENQRAQVRETIGRRKLEEEYNRYLQELRGEAYVSYRTGDRADNNATAAPAKSADPALPAPPPAKPTR.

Positions 1 to 25 (MTKPFSVVLASLLAITSTISPLASA) are cleaved as a signal peptide. 2 consecutive PpiC domains span residues 174-276 (GSKY…KLME) and 289-388 (VTEY…QRVG). Disordered regions lie at residues 329-348 (ATAK…GDLG) and 434-463 (GDRA…KPTR). Positions 439–452 (NNATAAPAKSADPA) are enriched in low complexity. The segment covering 453-463 (LPAPPPAKPTR) has biased composition (pro residues).

The protein localises to the periplasm. The catalysed reaction is [protein]-peptidylproline (omega=180) = [protein]-peptidylproline (omega=0). In terms of biological role, chaperone involved in the correct folding and assembly of outer membrane proteins. Recognizes specific patterns of aromatic residues and the orientation of their side chains, which are found more frequently in integral outer membrane proteins. May act in both early periplasmic and late outer membrane-associated steps of protein maturation. In Xanthomonas oryzae pv. oryzae (strain KACC10331 / KXO85), this protein is Chaperone SurA.